Reading from the N-terminus, the 356-residue chain is 3-dehydroquinate synthase (356 aa).

NAD(+)-binding positions include 69 to 74 (DGEQYK), 103 to 107 (GVVGD), 127 to 128 (TT), Lys140, and Lys149. Zn(2+) is bound by residues Glu182, His245, and His262.

Belongs to the sugar phosphate cyclases superfamily. Dehydroquinate synthase family. Co(2+) serves as cofactor. The cofactor is Zn(2+). Requires NAD(+) as cofactor.

The protein resides in the cytoplasm. It catalyses the reaction 7-phospho-2-dehydro-3-deoxy-D-arabino-heptonate = 3-dehydroquinate + phosphate. It functions in the pathway metabolic intermediate biosynthesis; chorismate biosynthesis; chorismate from D-erythrose 4-phosphate and phosphoenolpyruvate: step 2/7. Catalyzes the conversion of 3-deoxy-D-arabino-heptulosonate 7-phosphate (DAHP) to dehydroquinate (DHQ). This Pseudoalteromonas translucida (strain TAC 125) protein is 3-dehydroquinate synthase.